The primary structure comprises 129 residues: Small ribosomal subunit protein uS11 (129 aa).

It belongs to the universal ribosomal protein uS11 family. Part of the 30S ribosomal subunit. Interacts with proteins S7 and S18. Binds to IF-3.

Located on the platform of the 30S subunit, it bridges several disparate RNA helices of the 16S rRNA. Forms part of the Shine-Dalgarno cleft in the 70S ribosome. This is Small ribosomal subunit protein uS11 from Bradyrhizobium sp. (strain BTAi1 / ATCC BAA-1182).